Consider the following 244-residue polypeptide: DNA repair protein RecO (244 aa).

Belongs to the RecO family.

In terms of biological role, involved in DNA repair and RecF pathway recombination. This is DNA repair protein RecO from Nocardioides sp. (strain ATCC BAA-499 / JS614).